Reading from the N-terminus, the 664-residue chain is DNA mismatch repair protein MutL (664 aa).

Positions Arg382–Gln447 are disordered. Over residues Arg427 to Glu436 the composition is skewed to polar residues.

The protein belongs to the DNA mismatch repair MutL/HexB family.

Its function is as follows. This protein is involved in the repair of mismatches in DNA. It is required for dam-dependent methyl-directed DNA mismatch repair. May act as a 'molecular matchmaker', a protein that promotes the formation of a stable complex between two or more DNA-binding proteins in an ATP-dependent manner without itself being part of a final effector complex. In Vibrio vulnificus (strain YJ016), this protein is DNA mismatch repair protein MutL.